The primary structure comprises 713 residues: Zinc finger and BTB domain-containing protein 1 (713 aa).

K3 is covalently cross-linked (Glycyl lysine isopeptide (Lys-Gly) (interchain with G-Cter in SUMO2)). Residues 24–91 (CDCCIAIDDI…MYLGKIMTAP (68 aa)) form the BTB domain. Residues K200 and K205 each participate in a glycyl lysine isopeptide (Lys-Gly) (interchain with G-Cter in SUMO2) cross-link. Residues 216-242 (FTCDSCGFGFSCEKLLDEHVLTCTNRH) form a C2H2-type 1; atypical zinc finger. Glycyl lysine isopeptide (Lys-Gly) (interchain with G-Cter in SUMO2) cross-links involve residues K261, K266, K276, K284, K304, K316, K328, K340, and K346. Residues 270–319 (AEKDSSKTFSAQPDKYREDANQAPDDSASTTGSRKSTVEAGIAGEEKSRA) are disordered. Phosphoserine is present on S355. T356 bears the Phosphothreonine mark. A Glycyl lysine isopeptide (Lys-Gly) (interchain with G-Cter in SUMO2) cross-link involves residue K381. A C2H2-type 2; atypical zinc finger spans residues 448 to 470 (CACGKCGQILVKGRQLQEHAQRC). A Glycyl lysine isopeptide (Lys-Gly) (interchain with G-Cter in SUMO2) cross-link involves residue K528. A UBZ-type zinc finger spans residues 533 to 558 (PFRCPNCGQRFETENLVVEHMSSCLD). Residue K563 forms a Glycyl lysine isopeptide (Lys-Gly) (interchain with G-Cter in SUMO2) linkage. C2H2-type zinc fingers lie at residues 578-600 (HFCN…YTVH), 606-628 (FVCQ…NDMH), 634-656 (YVCS…MISH), 662-684 (TICQ…MDVH), and 686-709 (YTCG…NAKH).

In terms of assembly, homodimer. Homodimer. Interacts (via BTB domain) with TRIM28 (unphosphorylated or phosphorylated form). Post-translationally, sumoylated with SUMO2 at Lys-328 and to a lesser extent at Lys-266. Sumoylation inhibits its transcriptional repression activity and regulates its subcellular localization. As to expression, expressed strongly in thymus and spleen, less in lymph nodes and peripheral blood mononuclear cells (PBMCs) and weakly in bone marrow. Strongly expressed in immature, but weakly in mature bone marrow-lymphocyte B.

Its subcellular location is the nucleus. It localises to the nucleoplasm. Functionally, acts as a transcriptional repressor. Represses cAMP-responsive element (CRE)-mediated transcriptional activation. In addition, has a role in translesion DNA synthesis. Requires for UV-inducible RAD18 loading, PCNA monoubiquitination, POLH recruitment to replication factories and efficient translesion DNA synthesis. Plays a key role in the transcriptional regulation of T lymphocyte development. The protein is Zinc finger and BTB domain-containing protein 1 (Zbtb1) of Mus musculus (Mouse).